A 614-amino-acid chain; its full sequence is Putative ankyrin repeat protein RBE_0997 (614 aa).

ANK repeat units follow at residues 3–32 (KDEE…DPNI), 36–65 (DDKP…NPNA), 69–98 (DGEP…DPNL), 102–131 (RKNT…NLNA), 135–164 (SGYP…NPNL), 168–197 (DGSP…NVEA), 201–231 (DGNT…DKEK), 239–268 (NGET…TVNI), and 272–301 (AGYT…ELKE). One can recognise a Glutamine amidotransferase type-1 domain in the interval 348 to 580 (NVEDIDYRKI…VQSAETFMNK (233 aa)). Cys-444 acts as the Nucleophile in catalysis. Residues His-547 and Glu-549 contribute to the active site.

The chain is Putative ankyrin repeat protein RBE_0997 from Rickettsia bellii (strain RML369-C).